The following is a 262-amino-acid chain: GTP cyclohydrolase 1 type 2 homolog (262 aa).

A divalent metal cation contacts are provided by H65, D102, H222, and E225.

Belongs to the GTP cyclohydrolase I type 2/NIF3 family. As to quaternary structure, homohexamer.

The polypeptide is GTP cyclohydrolase 1 type 2 homolog (Streptococcus pyogenes serotype M6 (strain ATCC BAA-946 / MGAS10394)).